Consider the following 419-residue polypeptide: Tyrosine--tRNA ligase (419 aa).

L-tyrosine is bound at residue Tyr-34. The 'HIGH' region signature appears at Pro-39–His-48. L-tyrosine contacts are provided by Tyr-168 and Gln-172. Residues Lys-230–Ser-234 carry the 'KMSKS' region motif. Lys-233 provides a ligand contact to ATP. Residues Ala-352–Tyr-418 enclose the S4 RNA-binding domain.

The protein belongs to the class-I aminoacyl-tRNA synthetase family. TyrS type 1 subfamily. In terms of assembly, homodimer.

It localises to the cytoplasm. The enzyme catalyses tRNA(Tyr) + L-tyrosine + ATP = L-tyrosyl-tRNA(Tyr) + AMP + diphosphate + H(+). Catalyzes the attachment of tyrosine to tRNA(Tyr) in a two-step reaction: tyrosine is first activated by ATP to form Tyr-AMP and then transferred to the acceptor end of tRNA(Tyr). This Listeria monocytogenes serotype 4b (strain F2365) protein is Tyrosine--tRNA ligase.